The following is a 207-amino-acid chain: Venom allergen 5 (207 aa).

Intrachain disulfides connect Cys4–Cys16, Cys8–Cys105, Cys29–Cys97, and Cys173–Cys190. One can recognise an SCP domain in the interval 48 to 192 (VDEHNRFRQK…MKSHYLVCNY (145 aa)).

Belongs to the CRISP family. Venom allergen 5-like subfamily. Monomer. In terms of tissue distribution, expressed by the venom gland.

It is found in the secreted. The sequence is that of Venom allergen 5 from Polybia scutellaris rioplatensis (Camoati).